Reading from the N-terminus, the 1921-residue chain is Mediator of RNA polymerase II transcription subunit 13 (1921 aa).

Residues Lys220 and Lys226 each participate in a glycyl lysine isopeptide (Lys-Gly) (interchain with G-Cter in ubiquitin) cross-link. Disordered stretches follow at residues 400–434, 702–724, and 1485–1528; these read YEKNGYNSSGSSRNSSISSTSSASSGSGWRMTSRT, TQVEGRKGRHDKLPTVISDNSST, and SPTF…GDVS. Residues 407–427 are compositionally biased toward low complexity; that stretch reads SSGSSRNSSISSTSSASSGSG. Polar residues-rich tracts occupy residues 1486–1496 and 1515–1527; these read PTFTSLGSESS and EGITSGSSSQGDV.

The protein belongs to the Mediator complex subunit 13 family. Component of the Mediator complex. Interacts with CYCC1-2 (CDK8 homolog). Ubiquitous. Highest expression in the shoot apex.

The protein localises to the nucleus. Its function is as follows. Component of the Mediator complex, a coactivator involved in the regulated transcription of nearly all RNA polymerase II-dependent genes. Mediator functions as a bridge to convey information from gene-specific regulatory proteins to the basal RNA polymerase II transcription machinery. The Mediator complex, having a compact conformation in its free form, is recruited to promoters by direct interactions with regulatory proteins and serves for the assembly of a functional preinitiation complex with RNA polymerase II and the general transcription factors. Acts closely together with MAB12. Involved in the regulation of embryo patterning and cotyledon organogenesis. May act through transient repression of specific genes such as the ones responsive to auxin. The polypeptide is Mediator of RNA polymerase II transcription subunit 13 (MED13) (Arabidopsis thaliana (Mouse-ear cress)).